A 425-amino-acid polypeptide reads, in one-letter code: GPI mannosyltransferase 1 (425 aa).

The next 9 membrane-spanning stretches (helical) occupy residues 11–31 (VIGA…WQDA), 85–105 (FFAF…WLIA), 144–164 (LLGV…VSLA), 166–186 (VILG…PAVV), 233–253 (IHLT…MYIL), 295–315 (FESL…PLVL), 340–360 (SQYF…SSLM), 367–387 (ILVG…GYNL), and 398–418 (GLFL…GIIV).

Belongs to the PIGM family.

The protein resides in the endoplasmic reticulum membrane. It participates in glycolipid biosynthesis; glycosylphosphatidylinositol-anchor biosynthesis. Functionally, mannosyltransferase involved in glycosylphosphatidylinositol-anchor biosynthesis. Transfers the first alpha-1,4-mannose to GlcN-acyl-PI during GPI precursor assembly. Required for cell wall integrity. This is GPI mannosyltransferase 1 (gpi14) from Aspergillus fumigatus (strain ATCC MYA-4609 / CBS 101355 / FGSC A1100 / Af293) (Neosartorya fumigata).